Here is a 173-residue protein sequence, read N- to C-terminus: Calcium-binding protein 5 (173 aa).

EF-hand domains are found at residues 28–63, 82–99, 105–140, and 142–173; these read DEIEELREAFLEFDKDRDGFISCKDLGNLMRTMGYM, GRVDFDDFVELMTPKLLA, IGVQEMRDAFKEFDANGDGEITLGELQQAMQRLLGD, and LTSQEISEVVQEADINGDGTVDFEEFVKMMSR. Ca(2+) contacts are provided by D41, D43, D45, and D52. Ca(2+) contacts are provided by D118, N120, D122, E124, E129, D155, N157, D159, T161, and E166.

In terms of assembly, interacts with CACNA1C (via C-terminal CDB motif) in a calcium-dependent manner. Interacts with STXBP1. Interacts with MYO6. In terms of tissue distribution, expressed in the retina (at protein level).

Its subcellular location is the cytoplasm. Functionally, inhibits calcium-dependent inactivation of L-type calcium channel and shifts voltage dependence of activation to more depolarized membrane potentials. Involved in the transmission of light signals. May positively regulate neurotransmitter vesicle endocytosis and exocytosis in a salt-dependent manner. May play a role in the extension and network organization of neurites. The chain is Calcium-binding protein 5 (CABP5) from Bos taurus (Bovine).